Reading from the N-terminus, the 465-residue chain is UDP-N-acetylmuramate--L-alanine ligase (465 aa).

115 to 121 (GAHGKTT) contributes to the ATP binding site.

This sequence belongs to the MurCDEF family.

The protein localises to the cytoplasm. It carries out the reaction UDP-N-acetyl-alpha-D-muramate + L-alanine + ATP = UDP-N-acetyl-alpha-D-muramoyl-L-alanine + ADP + phosphate + H(+). It participates in cell wall biogenesis; peptidoglycan biosynthesis. Functionally, cell wall formation. This Coxiella burnetii (strain CbuK_Q154) (Coxiella burnetii (strain Q154)) protein is UDP-N-acetylmuramate--L-alanine ligase.